Consider the following 935-residue polypeptide: MMLSLRRFSMYVLRSLRLHFKKIIITLLTIQLLFITIFVLGGRSSIIDGNWKSFMALFFKPLAYTNRNNNHASFDLRSKDNVAKLYEKMNFDTSGKWIDTYTLKNNLLTVKMGPEKGQVLDSVDELRYYDNDPRLVWSVLLDHLLESDSNEYAFSWYDWANFDSTNKLIALRHTNISCQFVCEGAFDKNVLEMVESEVQEPLFVTNRNKYDESLWYNRVRKVVDSNSVQQAIHDHCMNNDAYSNGTPFELPFIISEISERLRPEVYDLQAKNHLLYSNFTPLSLTVLDSDKDAYRINLKTTDSSKSNIVQTNLLQNYIKRHRNEMVNGDLIFNHTSMFEKFLHHGSTKKRKLDVEALDKTIYAGEYLELSPSDFQFNAKERIIELETRLRSEGLPSHDTHYLRSLKTSVNTSPALQQKYFAEASDITDATADGHHRDRRFFSIGHNLLNDPQEFEARLNSLIRNFQKFVKANGLISWLSHGTLYGYLYDGLKFPWDVDHDLQMPIKHLHYLSQYFNQSLILEDPREGNGRFLLDVGSAITVGVHGNGENNIDARFIDIDSGIYIDITGLSVSSDAAKQYMSKFVEEESSGESFSALIEDYKFDENDYFDEVDGREGLAKYTIHELMEWVNSHPDDFTDAEKNLVTKTYKKELAISRSDYAEKDLSPKQRYLVNEKYNLYNCRNQHFSSLNIISPLRNTMFSGVSAFVPNRPIATLNNEYKVPAKYGLLSFQGKVYLPEFRYWFSFADMKKFANLQLKEPKITRLESPLNDLKFSDISLLITNILKCGFHSVFASLFNSFDSTVYRLKELEIQYDPSLSEEEKSSLLKTLRRGMSKKIKSPEKDPIIYIYERKLWENVEKLLNASNIYNIASQVEKEKGKEFVERSQQVYERNFDGFRLPDGGNSKTVNDLNSKGLNLFGDNKKTSNNIFGSDQKY.

At 1–21 (MMLSLRRFSMYVLRSLRLHFK) the chain is on the cytoplasmic side. The helical; Signal-anchor for type II membrane protein transmembrane segment at 22 to 42 (KIIITLLTIQLLFITIFVLGG) threads the bilayer. Residues 43–935 (RSSIIDGNWK…NNIFGSDQKY (893 aa)) lie on the Lumenal side of the membrane. Positions 498–500 (DHD) match the DXD motif.

It belongs to the MNN4 family.

It localises to the golgi apparatus membrane. In terms of biological role, plays a role in N-glycan mannosylphosphorylation and has partially redundant function with MNN4. This Saccharomyces cerevisiae (strain ATCC 204508 / S288c) (Baker's yeast) protein is Mannosyltransferase regulator 14.